A 217-amino-acid polypeptide reads, in one-letter code: MNQSLLSEFGDPLARVEAALAALRAGRGVLVADDEDRENEGDLIFAAQTMTNEQMAMMIRECSGIVCLCLTDERVRQLALPMMVEANSSHYQTAFTVTIEAAQGVTTGVSAADRITTIRAAIADGAKPSDLHRPGHVFPLRARTGGVLTRRGHTEATVDLMQLAGLKPFGVLCELTKEDGSMARLPDLVAFGRLHQMPVLTIEDLVQYRQLLSERSA.

Residues 37–38 (RE), Asp-42, 150–154 (RRGHT), and Glu-174 contribute to the D-ribulose 5-phosphate site. Glu-38 is a Mg(2+) binding site. His-153 is a Mg(2+) binding site.

Belongs to the DHBP synthase family. Homodimer. Mg(2+) is required as a cofactor. Requires Mn(2+) as cofactor.

It catalyses the reaction D-ribulose 5-phosphate = (2S)-2-hydroxy-3-oxobutyl phosphate + formate + H(+). It participates in cofactor biosynthesis; riboflavin biosynthesis; 2-hydroxy-3-oxobutyl phosphate from D-ribulose 5-phosphate: step 1/1. Catalyzes the conversion of D-ribulose 5-phosphate to formate and 3,4-dihydroxy-2-butanone 4-phosphate. The protein is 3,4-dihydroxy-2-butanone 4-phosphate synthase of Aeromonas salmonicida (strain A449).